The following is a 693-amino-acid chain: eEF1A lysine and N-terminal methyltransferase (693 aa).

This sequence belongs to the methyltransferase superfamily.

The enzyme catalyses L-lysyl-[protein] + S-adenosyl-L-methionine = N(6)-methyl-L-lysyl-[protein] + S-adenosyl-L-homocysteine + H(+). It catalyses the reaction N(6)-methyl-L-lysyl-[protein] + S-adenosyl-L-methionine = N(6),N(6)-dimethyl-L-lysyl-[protein] + S-adenosyl-L-homocysteine + H(+). It carries out the reaction N-terminal glycyl-L-lysyl-L-glutamyl-[protein] + 3 S-adenosyl-L-methionine = N-terminal N,N,N-trimethyl-glycyl-L-lysyl-L-glutamyl-[protein] + 3 S-adenosyl-L-homocysteine + 3 H(+). Dual methyltransferase that catalyzes methylation of elongation factor 1-alpha (eef1a1 and eef1a2) at two different positions, and is therefore involved in the regulation of mRNA translation. Via its C-terminus, methylates the N-terminus of eef1a1 and eef1a2. Via its N-terminus dimethylates lysine residues of eef1a1 and eef1a2. The polypeptide is eEF1A lysine and N-terminal methyltransferase (mettl13) (Xenopus laevis (African clawed frog)).